The primary structure comprises 353 residues: COMPASS component SPP1 (353 aa).

A PHD-type zinc finger spans residues 22–72 (DVYCICKRPDYGELMVGCDGCDDWFHFTCLHIPEQFKDLVFSFYCPYCQAG). Zn(2+) contacts are provided by Cys25, Cys27, Cys39, Cys42, His47, Cys50, Cys66, and Cys69. A non coventional C3H-type zinc finger region spans residues 83–124 (NGEGSLPKTLWKRKCRISDCYKPCLQDSKYCSEEHGREFVND). A Phosphoserine modification is found at Ser87. Zn(2+) contacts are provided by Cys97, Cys102, Cys113, and His117. The span at 235–244 (VECGKEDSKG) shows a compositional bias: basic and acidic residues. A disordered region spans residues 235-255 (VECGKEDSKGTKRKKKKNSSR). Over residues 245 to 255 (TKRKKKKNSSR) the composition is skewed to basic residues.

In terms of assembly, component of the Set1C/COMPASS complex which consists of SET1(2), BRE2(2), SPP1(2), SDC1(1), SHG1(1), SWD1(1), SWD2(1), and SWD3(1).

The protein resides in the nucleus. Component of the Set1C/COMPASS complex that specifically mono-, di- and trimethylates histone H3 to form H3K4me1/2/3, which subsequently plays a role in telomere length maintenance and transcription elongation regulation. COMPASS recognizes ubiquitinated H2B on one face of the nucleosome which stimulates the methylation of H3 on the opposing face. SPP1/CPS40 can recognize methylated histone lysine residue H3K4me3 or unmethylated H3K4. Stimulates the RNA binding activity of SET1. The sequence is that of COMPASS component SPP1 from Saccharomyces cerevisiae (strain ATCC 204508 / S288c) (Baker's yeast).